We begin with the raw amino-acid sequence, 295 residues long: (R)-3-hydroxydecanoyl-ACP:CoA transacylase (295 aa).

Residues 28–254 (NTIILINGSL…VIRDAGHFLD (227 aa)) enclose the AB hydrolase-1 domain.

It functions in the pathway polyester biosynthesis; polyhydroxyalkanoate biosynthesis. Its function is as follows. Catalyzes the transfer of the acyl moiety from in vitro synthesized 3-hydroxydecanoyl-CoA to acyl carrier protein. This Ectopseudomonas oleovorans (Pseudomonas oleovorans) protein is (R)-3-hydroxydecanoyl-ACP:CoA transacylase (phaG).